The sequence spans 237 residues: Neural retina-specific leucine zipper protein (237 aa).

Residues K20 and K24 each participate in a glycyl lysine isopeptide (Lys-Gly) (interchain with G-Cter in SUMO) cross-link. Residues 23–57 (VKREPSEGRPGPPTASLGSTPYSSVPPSPTFSEPG) are disordered. The segment at 30–93 (GRPGPPTASL…AGEALGLSPE (64 aa)) is minimal transactivation domain (MTD). Residues 159–185 (RLKQRRRTLKNRGYAQACRSKRLQQRR) are basic motif. Residues 159 to 222 (RLKQRRRTLK…DLYKARCDRL (64 aa)) form the bZIP domain. A leucine-zipper region spans residues 187–208 (LEAERARLAAQLDALRAEVARL).

It belongs to the bZIP family. As to quaternary structure, interacts with FIZ1; this interaction represses transactivation. Interacts (via the leucine-zipper domain) with CRX. Phosphorylated. Post-translationally, disumoylated at Lys-20. Sumoylation modulates the transcriptional activity of NRL on RHO and NR2E3 promoters, and is required for normal rod differentiation. As to expression, expressed in the brain and the retina. Expressed strongly in rod and cone cells (at protein level).

The protein resides in the cytoplasm. Its subcellular location is the nucleus. In terms of biological role, acts as a transcriptional activator which regulates the expression of several rod-specific genes, including RHO and PDE6B. Also functions as a transcriptional coactivator, stimulating transcription mediated by the transcription factor CRX and NR2E3. Binds to the rhodopsin promoter in a sequence-specific manner. The chain is Neural retina-specific leucine zipper protein (NRL) from Homo sapiens (Human).